Here is a 490-residue protein sequence, read N- to C-terminus: ABC transporter ATP-binding protein ModF (490 aa).

2 consecutive ABC transporter domains span residues 4 to 235 (LQIL…AHSE) and 261 to 489 (IVLN…LTKI). Residues 36-43 (GSNGSGKS) and 293-300 (GPNGAGKS) contribute to the ATP site.

The protein belongs to the ABC transporter superfamily.

The protein resides in the cell inner membrane. Probably not involved in the transport of molybdenum into the cell. The chain is ABC transporter ATP-binding protein ModF (modF) from Escherichia coli (strain K12).